The chain runs to 325 residues: MSETANWQPSAAIANLLKRATILAEIRRFFADRGVLEVETPAMGQFTVTDIQLFSFQTEFVGPGAADGMTLYLMTSPEYHMKRLLAAGSGPIYQLGRCFRNEEAGRYHNPEFTMLEWYRPHYDMYRLMNEVDDLLQQILDCESAESLSYQQAFLRYLDIDPLSAEKEKLREIAAKLDLSNIADIEEDRDTLLQLLFAVGVEPHIGTEKPTFIYHFPASQASLAEISKEDHRVAERFEVYFKGVELANGFRELTDSHEQCQRFERDNRKRAALGLPVRPIDENLIGALKQGMPECAGVALGVDRLVMLALGAEKLSDVMAFSITKA.

Ser76–Glu78 serves as a coordination point for substrate. ATP-binding positions include Arg100 to Glu102 and Asn109. Position 118 (Tyr118) interacts with substrate. Glu244–Leu245 is an ATP binding site. Residue Glu251 participates in substrate binding. Position 300 (Gly300) interacts with ATP.

It belongs to the class-II aminoacyl-tRNA synthetase family. EpmA subfamily. Homodimer.

It catalyses the reaction D-beta-lysine + L-lysyl-[protein] + ATP = N(6)-((3R)-3,6-diaminohexanoyl)-L-lysyl-[protein] + AMP + diphosphate + H(+). Functionally, with EpmB is involved in the beta-lysylation step of the post-translational modification of translation elongation factor P (EF-P). Catalyzes the ATP-dependent activation of (R)-beta-lysine produced by EpmB, forming a lysyl-adenylate, from which the beta-lysyl moiety is then transferred to the epsilon-amino group of a conserved specific lysine residue in EF-P. The protein is Elongation factor P--(R)-beta-lysine ligase of Photorhabdus laumondii subsp. laumondii (strain DSM 15139 / CIP 105565 / TT01) (Photorhabdus luminescens subsp. laumondii).